The chain runs to 111 residues: Large ribosomal subunit protein uL23 (111 aa).

It belongs to the universal ribosomal protein uL23 family. In terms of assembly, part of the 50S ribosomal subunit. Contacts protein L29, and trigger factor when it is bound to the ribosome.

Its function is as follows. One of the early assembly proteins it binds 23S rRNA. One of the proteins that surrounds the polypeptide exit tunnel on the outside of the ribosome. Forms the main docking site for trigger factor binding to the ribosome. The chain is Large ribosomal subunit protein uL23 from Chlamydia abortus (strain DSM 27085 / S26/3) (Chlamydophila abortus).